The following is an 859-amino-acid chain: Rod cGMP-specific 3',5'-cyclic phosphodiesterase subunit alpha (859 aa).

N-acetylglycine is present on Gly-2. GAF domains follow at residues 73-222 (QAEK…NLIM) and 254-431 (DIER…GWSV). One can recognise a PDEase domain in the interval 483–816 (EEEELAEILQ…KEWKALADEY (334 aa)). His-559 functions as the Proton donor in the catalytic mechanism. A divalent metal cation-binding residues include His-563, His-599, Asp-600, and Asp-720. Residues 821-859 (KGLEEEKQKQQAANQAAAGSQHGGKQPGGGPASKSCCVQ) form a disordered region. The segment covering 830–840 (QQAANQAAAGS) has biased composition (low complexity). Gly residues predominate over residues 841-851 (QHGGKQPGGGP). Cys-856 is modified (cysteine methyl ester). Residue Cys-856 is the site of S-farnesyl cysteine attachment. A propeptide spans 857–859 (CVQ) (removed in mature form).

It belongs to the cyclic nucleotide phosphodiesterase family. As to quaternary structure, oligomer composed of two catalytic chains (alpha and beta), an inhibitory chain (gamma) and the delta chain. A divalent metal cation serves as cofactor.

It localises to the cell membrane. The protein resides in the cell projection. It is found in the cilium. Its subcellular location is the photoreceptor outer segment. It catalyses the reaction 3',5'-cyclic GMP + H2O = GMP + H(+). Functionally, rod-specific cGMP phosphodiesterase that catalyzes the hydrolysis of 3',5'-cyclic GMP. This protein participates in processes of transmission and amplification of the visual signal. This is Rod cGMP-specific 3',5'-cyclic phosphodiesterase subunit alpha from Bos taurus (Bovine).